The following is a 107-amino-acid chain: Protein Rev (107 aa).

Phosphoserine; by host CK2 is present on residues Ser-5 and Ser-8. Residues 18-26 form a homomultimerization region; that stretch reads IIKILYQSN. 2 disordered regions span residues 26–50 and 82–107; these read NPYP…ARQR and NINC…VGNP. A Nuclear localization signal and RNA-binding (RRE) motif is present at residues 34–50; the sequence is TRQARRNRRRRWRARQR. A compositionally biased stretch (basic residues) spans 36–50; that stretch reads QARRNRRRRWRARQR. The Nuclear export signal and binding to XPO1 signature appears at 73 to 84; the sequence is FQLPPIERLNIN. Over residues 86–101 the composition is skewed to low complexity; sequence SESGGTSGTQQPQGNT. Ser-92 carries the phosphoserine; by host modification.

The protein belongs to the HIV-1 REV protein family. Homomultimer; when bound to the RRE. Multimeric assembly is essential for activity and may involve XPO1. Binds to human KPNB1, XPO1, TNPO1, RANBP5 and IPO7. Interacts with the viral Integrase. Interacts with human KHDRBS1. Interacts with human NAP1; this interaction decreases Rev multimerization and stimulates its activity. Interacts with human DEAD-box helicases DDX3 and DDX24; these interactions may serve for viral RNA export to the cytoplasm and packaging, respectively. Interacts with human PSIP1; this interaction may inhibit HIV-1 DNA integration by promoting dissociation of the Integrase-LEDGF/p75 complex. Asymmetrically arginine dimethylated at one site by host PRMT6. Methylation impairs the RNA-binding activity and export of viral RNA from the nucleus to the cytoplasm. In terms of processing, phosphorylated by protein kinase CK2. Presence of, and maybe binding to the N-terminus of the regulatory beta subunit of CK2 is necessary for CK2-mediated Rev's phosphorylation.

It localises to the host nucleus. The protein localises to the host nucleolus. It is found in the host cytoplasm. Escorts unspliced or incompletely spliced viral pre-mRNAs (late transcripts) out of the nucleus of infected cells. These pre-mRNAs carry a recognition sequence called Rev responsive element (RRE) located in the env gene, that is not present in fully spliced viral mRNAs (early transcripts). This function is essential since most viral proteins are translated from unspliced or partially spliced pre-mRNAs which cannot exit the nucleus by the pathway used by fully processed cellular mRNAs. Rev itself is translated from a fully spliced mRNA that readily exits the nucleus. Rev's nuclear localization signal (NLS) binds directly to KPNB1/Importin beta-1 without previous binding to KPNA1/Importin alpha-1. KPNB1 binds to the GDP bound form of RAN (Ran-GDP) and targets Rev to the nucleus. In the nucleus, the conversion from Ran-GDP to Ran-GTP dissociates Rev from KPNB1 and allows Rev's binding to the RRE in viral pre-mRNAs. Rev multimerization on the RRE via cooperative assembly exposes its nuclear export signal (NES) to the surface. Rev can then form a complex with XPO1/CRM1 and Ran-GTP, leading to nuclear export of the complex. Conversion from Ran-GTP to Ran-GDP mediates dissociation of the Rev/RRE/XPO1/RAN complex, so that Rev can return to the nucleus for a subsequent round of export. Beside KPNB1, also seems to interact with TNPO1/Transportin-1, RANBP5/IPO5 and IPO7/RANBP7 for nuclear import. The nucleoporin-like HRB/RIP is an essential cofactor that probably indirectly interacts with Rev to release HIV RNAs from the perinuclear region to the cytoplasm. In Human immunodeficiency virus type 1 group M subtype C (isolate 92BR025) (HIV-1), this protein is Protein Rev.